Here is a 579-residue protein sequence, read N- to C-terminus: MESSAKRKMDPDNPDEGPSSKVPRPETPVTKATTFLQTMLRKEVNSQLSLGDPLFPELAEESLKTFERVTEDCNENPEKDVLAELGDILAQAVNHAGIDSSSTGPTLTTHSCSVSSAPLNKPTPTSVAVTNTPLPGASATPELSPRKKPRKTTRPFKVIIKPPVPPAPIMLPLIKQEDIKPEPDFTIQYRNKIIDTAGCIVISDSEEEQGEEVETRGATASSPSTGSGTPRVTSPTHPLSQMNHPPLPDPLGRPDEDSSSSSSSCSSASDSESESEEMKCSSGGGASVTSSHHGRGGFGGAASSSLLSCGHQSSGGASTGPRKKKSKRISELDNEKVRNIMKDKNTPFCTPNVQTRRGRVKIDEVSRMFRNTNRSLEYKNLPFTIPSMHQVLDEAIKACKTMQVNNKGIQIIYTRNHEVKSEVDAVRCRLGTMCNLALSTPFLMEHTMPVTHPPEVAQRTADACNEGVKAAWSLKELHTHQLCPRSSDYRNMIIHAATPVDLLGALNLCLPLMQKFPKQVMVRIFSTNQGGFMLPIYETAAKAYAVGQFEQPTETPPEDLDTLSLAIEAAIQDLRNKSQ.

Residues 1–11 (MESSAKRKMDP) show a composition bias toward basic and acidic residues. Disordered regions lie at residues 1–30 (MESSAKRKMDPDNPDEGPSSKVPRPETPVT) and 99–161 (DSSS…VIIK). Polar residues predominate over residues 99–133 (DSSSTGPTLTTHSCSVSSAPLNKPTPTSVAVTNTP). Residues Lys-175 and Lys-180 each participate in a glycyl lysine isopeptide (Lys-Gly) (interchain with G-Cter in SUMO) cross-link. Residues 199–202 (CIVI) carry the SUMO-interacting motif 1/SIM1 motif. Residues 200–208 (IVISDSEEE) form a non-covalent SUMO1 binding region (SIM) region. Phosphoserine occurs at positions 203 and 205. The disordered stretch occupies residues 206 to 335 (EEEQGEEVET…SKRISELDNE (130 aa)). Composition is skewed to low complexity over residues 216-236 (RGATASSPSTGSGTPRVTSPT), 259-270 (SSSSSSCSSASD), and 301-316 (AASSSLLSCGHQSSGG). An SUMO-interacting motif 1/SIM2 motif is present at residues 409-412 (IQII). Residues 500–503 (VDLL) carry the SUMO-interacting motif 1/SIM3 motif.

The protein belongs to the HHV-5 IE2 protein family. In terms of assembly, interacts with host SUMO-modified form of TATA-binding protein (TBP)-associated factor 12/TAF12 in a SIM-dependent manner; this interaction increases the transactivation activity of IE2. Interacts with host CHAF1A. Interacts with several components of the host transcriptional machinery including TBP, TF2B and CREB1. Interacts with host DNA replication licensing factor MCM3. Interacts with host PLSCR1; this interaction inhibits IE2 transactivating activity. In terms of processing, phosphorylated by host CK2 at Ser-203 and Ser-205; leading to enhanced SUMOylation. Post-translationally, SUMOylated; SUMOylation is enhanced when IE2 is phosphorylated by host CK2. The sumoylation is necessary for efficient replication of the virus and thus for the function of this viral transcription factor.

The protein resides in the host nucleus. Functionally, stimulates viral early and late gene expression and thus play a crucial role in the regulation of productive infection. Selectively drives host RNA Pol II transcription initiation at a subset of viral early-late and late promoters without substantially affecting Pol II transcription of expressed host genes. Mechanistically, forms a repressive complex at the major immediate-early promoter region involving direct association with host nucleosomes and TBP. Concerning activation, stimulates transcription by binding nearby, but not within, core promoter regions. In addition, activates quiescent cells to reenter the cell cycle and up-regulates several E2F-responsive genes, which are responsible for pushing the cell into S phase. In S-phase, inhibits cellular DNA synthesis and blocks further cell cycle progression. The sequence is that of Viral transcription factor IE2 (UL122) from Homo sapiens (Human).